Here is a 407-residue protein sequence, read N- to C-terminus: Indoleamine 2,3-dioxygenase 2 (407 aa).

Position 347 (H347) interacts with heme.

It belongs to the indoleamine 2,3-dioxygenase family. The cofactor is heme. As to expression, detected in liver, small intestine, spleen, placenta, thymus, lung, brain, kidney, and colon. Also expressed at low level in testis and thyroid. Not expressed in the majority of human tumor samples (&gt;99%).

It catalyses the reaction L-tryptophan + O2 = N-formyl-L-kynurenine. Its pathway is amino-acid degradation; L-tryptophan degradation via kynurenine pathway; L-kynurenine from L-tryptophan: step 1/2. With respect to regulation, activity is inhibited by D-1MT (1-methyl-D-tryptophan) and MTH-trp (methylthiohydantoin-DL-tryptophan) but not L-1MT (1-methyl-L-tryptophan). Functionally, catalyzes the first and rate limiting step of the catabolism of the essential amino acid tryptophan along the kynurenine pathway. Involved in immune regulation. May not play a significant role in tryptophan-related tumoral resistance. The polypeptide is Indoleamine 2,3-dioxygenase 2 (Homo sapiens (Human)).